A 796-amino-acid chain; its full sequence is Striatin-3 (796 aa).

M1 is modified (N-acetylmethionine). Gly residues predominate over residues 1–13 (MDELAGGGGGGQG). The disordered stretch occupies residues 1–60 (MDELAGGGGGGQGMAAPPRPQQGPGGNLSLPPGANGAPGGGGPPAAEAAGPPAGPELSRP). Positions 71 to 79 (YIQHEWARF) are caveolin-binding. Residues 77–136 (ARFEMERAHWEVERAELQARIAFLQGERKGQENLKKDLVRRIKMLEYALKQERAKYHKLK) adopt a coiled-coil conformation. A Phosphothreonine modification is found at T150. Residues 166–183 (QNSQLTWKQGRQLLRQYL) are calmodulin-binding. Residues S202, S214, S229, S257, and S334 each carry the phosphoserine modification. Disordered stretches follow at residues 252–271 (ENAD…IPEG) and 311–335 (EDGE…DLSP). Acidic residues predominate over residues 253-264 (NADDSDEEENDM). WD repeat units lie at residues 477–516 (SHFD…PAKK), 530–569 (AHIG…VDPY), 583–622 (AHTD…PCVC), 678–717 (QSSN…MIHS), 720–759 (AHLD…CVQE), and 766–795 (KLDE…AKVF).

Belongs to the WD repeat striatin family. In terms of assembly, tetramerizes. Part of the core of STRIPAK complexes composed of PP2A catalytic and scaffolding subunits, the striatins (PP2A regulatory subunits), the striatin-associated proteins MOB4, STRIP1 and STRIP2, PDCD10 and members of the STE20 kinases, such as STK24 and STK26. The STRIPAK complex can be extended by adapter proteins such as SLMAP:SIKE1 or CTTNBP2NL. Interacts with CDC42BPB. In terms of tissue distribution, mainly expressed in the brain and muscles but is also detected at low levels in various tissues such as kidney, spleen and lung.

The protein resides in the cytoplasm. Its subcellular location is the membrane. Functionally, calmodulin-binding scaffolding protein which is the center of the striatin-interacting phosphatase and kinase (STRIPAK) complexes. STRIPAK complexes have critical roles in protein (de)phosphorylation and are regulators of multiple signaling pathways including Hippo, MAPK, nuclear receptor and cytoskeleton remodeling. Different types of STRIPAK complexes are involved in a variety of biological processes such as cell growth, differentiation, apoptosis, metabolism and immune regulation. This is Striatin-3 (Strn3) from Mus musculus (Mouse).